Reading from the N-terminus, the 249-residue chain is GTP cyclohydrolase 1 type 2 homolog (249 aa).

The a divalent metal cation site is built by His64, His65, Asp102, His217, and Glu221.

It belongs to the GTP cyclohydrolase I type 2/NIF3 family. In terms of assembly, homohexamer.

This is GTP cyclohydrolase 1 type 2 homolog from Neisseria meningitidis serogroup A / serotype 4A (strain DSM 15465 / Z2491).